Consider the following 54-residue polypeptide: Large ribosomal subunit protein bL32c (54 aa).

The tract at residues 1 to 20 (MAVPKKKMSKSRRNSRKSNW) is disordered.

Belongs to the bacterial ribosomal protein bL32 family.

The protein resides in the plastid. The protein localises to the chloroplast. In Euglena gracilis, this protein is Large ribosomal subunit protein bL32c (rpl32).